The primary structure comprises 442 residues: Cysteine proteinase 4 (442 aa).

Residues 1 to 17 form the signal peptide; the sequence is MRVLSFLCLLLVSYASA. The propeptide at 18–111 is activation peptide; it reads KQQFSELQYR…TEEEKIFSTP (94 aa). 2 disulfide bridges follow: C132-C178 and C169-C212. C135 is a catalytic residue. Residues N228 and N254 are each glycosylated (N-linked (GlcNAc...) asparagine). A disulfide bridge connects residues C270 and C428. H277 is an active-site residue. Residues 286–396 form a disordered region; that stretch reads SGSSSSSGSS…SGSGSGAVEA (111 aa). Positions 287–376 are enriched in low complexity; the sequence is GSSSSSGSSS…SASGQASASG (90 aa). Positions 377-391 are enriched in gly residues; that stretch reads SGSGSGSGSGSGSGS. Residue N406 is part of the active site.

It belongs to the peptidase C1 family. Post-translationally, glycosylated; contains GlcNAc-alpha-1-P-Ser residues and fucose.

It is found in the lysosome. This is Cysteine proteinase 4 (cprD) from Dictyostelium discoideum (Social amoeba).